The primary structure comprises 271 residues: Phosphonoacetaldehyde hydrolase (271 aa).

The active-site Nucleophile is aspartate 12. Residues aspartate 12 and alanine 14 each contribute to the Mg(2+) site. The active-site Schiff-base intermediate with substrate is the lysine 54. Aspartate 188 serves as a coordination point for Mg(2+).

The protein belongs to the HAD-like hydrolase superfamily. PhnX family. In terms of assembly, homodimer. Mg(2+) serves as cofactor.

It carries out the reaction phosphonoacetaldehyde + H2O = acetaldehyde + phosphate + H(+). Its function is as follows. Involved in phosphonate degradation. The polypeptide is Phosphonoacetaldehyde hydrolase (Vibrio parahaemolyticus serotype O3:K6 (strain RIMD 2210633)).